The sequence spans 374 residues: Ribonuclease D (374 aa).

Positions 6-171 (IISTTEDLKK…RATRVILLSK (166 aa)) constitute a 3'-5' exonuclease domain. The HRDC domain maps to 213 to 292 (DRKSIGVAQE…ARALNKKEVD (80 aa)).

Belongs to the RNase D family. A divalent metal cation serves as cofactor.

It localises to the cytoplasm. The enzyme catalyses Exonucleolytic cleavage that removes extra residues from the 3'-terminus of tRNA to produce 5'-mononucleotides.. In terms of biological role, exonuclease involved in the 3' processing of various precursor tRNAs. Initiates hydrolysis at the 3'-terminus of an RNA molecule and releases 5'-mononucleotides. The chain is Ribonuclease D from Desulfotalea psychrophila (strain LSv54 / DSM 12343).